The sequence spans 801 residues: Ribosome biogenesis protein ERB1 (801 aa).

2 disordered regions span residues 1–135 and 358–377; these read MGSK…LEDR and PEYLPTKEEREEWEKMDPED. Residues 35 to 90 are compositionally biased toward acidic residues; that stretch reads SEDEEDYIPSSEVDEDDDDDADESASEDSDDSNDSEDDEVEEDDEALLSDEIPSEG. Basic and acidic residues-rich tracts occupy residues 91–113, 124–135, and 362–377; these read ESEKDQDLAESKESKQDQDKEPS, PPRKEDEELEDR, and PTKEEREEWEKMDPED. WD repeat units lie at residues 451–490 and 494–534; these read GHEGRVRSVAIDPTGVALATGGDDGTVRVWELLTGRQVWS and NGDE…VTPA. A disordered region spans residues 546-570; that stretch reads GFGHATNGKQQANLPPGKEPPGKWA. 5 WD repeats span residues 586–628, 631–669, 672–711, 715–755, and 771–801; these read TVRS…TQIP, KLNGLAQTASFHPLRPLFFVATQRSIRCYDLQKLELVKI, PGAKWISSFDVHPGGDNLVVGSYDKRLLWHDLDLSNRPYK, FHTE…DQLE, and VNKLGVLDIDWHPREPWCVSAGADGTARLWM.

It belongs to the WD repeat BOP1/ERB1 family. Component of the NOP7 complex, composed of ERB1, NOP7 and YTM1. The complex is held together by ERB1, which interacts with NOP7 via its N-terminal domain and with YTM1 via a high-affinity interaction between the seven-bladed beta-propeller domains of the 2 proteins. The NOP7 complex associates with the 66S pre-ribosome.

It localises to the nucleus. Its subcellular location is the nucleolus. It is found in the nucleoplasm. Its function is as follows. Component of the NOP7 complex, which is required for maturation of the 25S and 5.8S ribosomal RNAs and formation of the 60S ribosome. The sequence is that of Ribosome biogenesis protein ERB1 from Chaetomium thermophilum (strain DSM 1495 / CBS 144.50 / IMI 039719) (Thermochaetoides thermophila).